The following is a 374-amino-acid chain: Carbamoyl phosphate synthase small chain (374 aa).

The tract at residues M1–P186 is CPSase. Residues S47, G237, and G239 each coordinate L-glutamine. Residues K189–S374 enclose the Glutamine amidotransferase type-1 domain. C265 functions as the Nucleophile in the catalytic mechanism. Residues L266, Q269, N307, G309, and F310 each coordinate L-glutamine. Catalysis depends on residues H349 and E351.

This sequence belongs to the CarA family. In terms of assembly, composed of two chains; the small (or glutamine) chain promotes the hydrolysis of glutamine to ammonia, which is used by the large (or ammonia) chain to synthesize carbamoyl phosphate. Tetramer of heterodimers (alpha,beta)4.

The enzyme catalyses hydrogencarbonate + L-glutamine + 2 ATP + H2O = carbamoyl phosphate + L-glutamate + 2 ADP + phosphate + 2 H(+). The catalysed reaction is L-glutamine + H2O = L-glutamate + NH4(+). It participates in amino-acid biosynthesis; L-arginine biosynthesis; carbamoyl phosphate from bicarbonate: step 1/1. It functions in the pathway pyrimidine metabolism; UMP biosynthesis via de novo pathway; (S)-dihydroorotate from bicarbonate: step 1/3. Small subunit of the glutamine-dependent carbamoyl phosphate synthetase (CPSase). CPSase catalyzes the formation of carbamoyl phosphate from the ammonia moiety of glutamine, carbonate, and phosphate donated by ATP, constituting the first step of 2 biosynthetic pathways, one leading to arginine and/or urea and the other to pyrimidine nucleotides. The small subunit (glutamine amidotransferase) binds and cleaves glutamine to supply the large subunit with the substrate ammonia. The polypeptide is Carbamoyl phosphate synthase small chain (Xylella fastidiosa (strain 9a5c)).